The sequence spans 814 residues: Probable G-protein coupled receptor 156 (814 aa).

The Extracellular segment spans residues 1-47; it reads MEPEINCSELCDSFPGQELDRRPLHDLCKTTITSSHHSSKTISSLSP. Residue N6 is glycosylated (N-linked (GlcNAc...) asparagine). Residues 48–68 traverse the membrane as a helical segment; that stretch reads VLLGIVWTFLSCGLLLILFFL. Residues 69–86 are Cytoplasmic-facing; that stretch reads AFTIHCRKNRIVKMSSPN. Residues 87 to 107 traverse the membrane as a helical segment; it reads LNIVTLLGSCLTYSSAYLFGI. At 108 to 118 the chain is on the extracellular side; the sequence is QDVLVGSSMET. Residues 119 to 139 traverse the membrane as a helical segment; sequence LIQTRLSMLCIGTSLVFGPIL. The Cytoplasmic portion of the chain corresponds to 140–164; it reads GKSWRLYKVFTQRVPDKRVIIKDLQ. The chain crosses the membrane as a helical span at residues 165–185; the sequence is LLGLVAALLMADVILLMTWVL. The Extracellular segment spans residues 186–222; sequence TDPIQCLQILSVSMTVTGKDVSCTSTSTHFCASRYSD. The helical transmembrane segment at 223-243 threads the bilayer; the sequence is VWIALIWGCKGLLLLYGAYLA. The Cytoplasmic segment spans residues 244-257; it reads GLTGHVSSPPVNQS. Residues 258–278 form a helical membrane-spanning segment; that stretch reads LTIMVGVNLLVLAAGLLFVVT. At 279–288 the chain is on the extracellular side; sequence RYLHSWPNLV. Residues 289 to 309 traverse the membrane as a helical segment; that stretch reads FGLTSGGIFVCTTTINCFIFI. Residues 310–814 are Cytoplasmic-facing; sequence PQLKQWKAFE…FKDDLKPTLV (505 aa). Residues 354-390 adopt a coiled-coil conformation; it reads EKSSMERLLTEKNAVIESLQEQVNNAKEKIVRLMSAE. Disordered stretches follow at residues 422–545, 557–724, and 769–792; these read AQGP…SSVI, GLGP…PEQW, and SSSD…LASW. Polar residues predominate over residues 443 to 454; it reads SQCTSGPSSYAQ. Residues 468–484 show a composition bias toward basic and acidic residues; it reads GKEEKISDSKDFSDHLD. A compositionally biased stretch (polar residues) spans 486–496; it reads GCSQKPWTEQS. Basic and acidic residues predominate over residues 523-545; that stretch reads QRQRHLENSEEPPERRSRVSSVI. The segment covering 563–581 has biased composition (polar residues); that stretch reads SLSTAPSCHQQTWKNSAAF. The span at 599-610 shows a compositional bias: basic residues; that stretch reads VRRRRAAQRARS. A compositionally biased stretch (polar residues) spans 639 to 651; that stretch reads NGDSPSLAPQTTD. A compositionally biased stretch (low complexity) spans 769–780; it reads SSSDSSDSGTSD.

Belongs to the G-protein coupled receptor 3 family. GABA-B receptor subfamily. In terms of tissue distribution, ubiquitous expression both in the CNS and in peripheral tissues. Very high expression in fetal brain and testis relative to expression in other tissues.

The protein resides in the cell membrane. Orphan G-protein coupled receptor involved in the regulation of hair cell orientation in mechanosensory organs of the inner ear. It is required to trigger a 180 degree reversal in hair cell orientation, creating a virtual line of polarity reversal (LPR) across which stereociliary bundles are arranged in opposite orientations. This is Probable G-protein coupled receptor 156 (GPR156) from Homo sapiens (Human).